The sequence spans 226 residues: Clarin-3 (226 aa).

The helical transmembrane segment at 8 to 28 threads the bilayer; that stretch reads LMFLSSFFTSLGSFIVICSIL. A glycan (N-linked (GlcNAc...) asparagine) is linked at N83. The next 3 membrane-spanning stretches (helical) occupy residues 92-112, 129-149, and 181-201; these read VTILFLVLSLITSLLSSGFTF, VYTWNGLGASFVFVTMILFVA, and FWLILLVILLNIVTVTIIIFY.

The protein belongs to the clarin family.

Its subcellular location is the membrane. This Homo sapiens (Human) protein is Clarin-3 (CLRN3).